Here is a 471-residue protein sequence, read N- to C-terminus: V-type ATP synthase beta chain (471 aa).

It belongs to the ATPase alpha/beta chains family.

Functionally, produces ATP from ADP in the presence of a proton gradient across the membrane. The V-type beta chain is a regulatory subunit. This is V-type ATP synthase beta chain from Streptococcus pyogenes serotype M18 (strain MGAS8232).